The following is a 376-amino-acid chain: Putative phosphoserine aminotransferase (376 aa).

R50 contacts L-glutamate. Residues 84–85, F108, T154, D176, and Q199 each bind pyridoxal 5'-phosphate; that span reads AT. K200 is subject to N6-(pyridoxal phosphate)lysine. Residue 251–252 coordinates pyridoxal 5'-phosphate; the sequence is NT.

Belongs to the class-V pyridoxal-phosphate-dependent aminotransferase family. SerC subfamily. As to quaternary structure, homodimer. Requires pyridoxal 5'-phosphate as cofactor.

Its subcellular location is the cytoplasm. The enzyme catalyses O-phospho-L-serine + 2-oxoglutarate = 3-phosphooxypyruvate + L-glutamate. It carries out the reaction 4-(phosphooxy)-L-threonine + 2-oxoglutarate = (R)-3-hydroxy-2-oxo-4-phosphooxybutanoate + L-glutamate. Its pathway is amino-acid biosynthesis; L-serine biosynthesis; L-serine from 3-phospho-D-glycerate: step 2/3. It functions in the pathway cofactor biosynthesis; pyridoxine 5'-phosphate biosynthesis; pyridoxine 5'-phosphate from D-erythrose 4-phosphate: step 3/5. In terms of biological role, catalyzes the reversible conversion of 3-phosphohydroxypyruvate to phosphoserine and of 3-hydroxy-2-oxo-4-phosphonooxybutanoate to phosphohydroxythreonine. This chain is Putative phosphoserine aminotransferase, found in Mycobacterium bovis (strain ATCC BAA-935 / AF2122/97).